Here is a 503-residue protein sequence, read N- to C-terminus: ATP synthase subunit alpha, chloroplastic (503 aa).

170–177 lines the ATP pocket; sequence GDRQTGKT.

It belongs to the ATPase alpha/beta chains family. In terms of assembly, F-type ATPases have 2 components, CF(1) - the catalytic core - and CF(0) - the membrane proton channel. CF(1) has five subunits: alpha(3), beta(3), gamma(1), delta(1), epsilon(1). CF(0) has four main subunits: a, b, b' and c.

The protein localises to the plastid. Its subcellular location is the chloroplast thylakoid membrane. It carries out the reaction ATP + H2O + 4 H(+)(in) = ADP + phosphate + 5 H(+)(out). Functionally, produces ATP from ADP in the presence of a proton gradient across the membrane. The alpha chain is a regulatory subunit. The sequence is that of ATP synthase subunit alpha, chloroplastic from Gracilaria tenuistipitata var. liui (Red alga).